Consider the following 456-residue polypeptide: Cysteine--tRNA ligase (456 aa).

Zn(2+) is bound at residue Cys-29. Residues 31–41 carry the 'HIGH' region motif; the sequence is PTVYDYAHVGN. Zn(2+) contacts are provided by Cys-209, His-234, and Glu-238. The 'KMSKS' region signature appears at 267 to 271; it reads KMSKS. Lys-270 is an ATP binding site.

It belongs to the class-I aminoacyl-tRNA synthetase family. Monomer. The cofactor is Zn(2+).

The protein resides in the cytoplasm. The catalysed reaction is tRNA(Cys) + L-cysteine + ATP = L-cysteinyl-tRNA(Cys) + AMP + diphosphate. This is Cysteine--tRNA ligase from Rhodospirillum centenum (strain ATCC 51521 / SW).